Here is a 529-residue protein sequence, read N- to C-terminus: uncharacterized protein (529 aa).

In terms of domain architecture, Radical SAM core spans 157 to 410 (DFPHIICEIE…FKNRVRENID (254 aa)). [4Fe-4S] cluster is bound by residues Cys-171, Cys-176, and Cys-179.

[4Fe-4S] cluster is required as a cofactor.

This is an uncharacterized protein from Archaeoglobus fulgidus (strain ATCC 49558 / DSM 4304 / JCM 9628 / NBRC 100126 / VC-16).